Consider the following 429-residue polypeptide: Enolase (429 aa).

Gln-167 lines the (2R)-2-phosphoglycerate pocket. The active-site Proton donor is the Glu-209. 3 residues coordinate Mg(2+): Asp-246, Glu-289, and Asp-316. Residues Lys-341, Arg-370, Ser-371, and Lys-392 each contribute to the (2R)-2-phosphoglycerate site. The Proton acceptor role is filled by Lys-341.

Belongs to the enolase family. As to quaternary structure, component of the RNA degradosome, a multiprotein complex involved in RNA processing and mRNA degradation. Mg(2+) serves as cofactor.

The protein localises to the cytoplasm. Its subcellular location is the secreted. It localises to the cell surface. The catalysed reaction is (2R)-2-phosphoglycerate = phosphoenolpyruvate + H2O. It participates in carbohydrate degradation; glycolysis; pyruvate from D-glyceraldehyde 3-phosphate: step 4/5. Its function is as follows. Catalyzes the reversible conversion of 2-phosphoglycerate (2-PG) into phosphoenolpyruvate (PEP). It is essential for the degradation of carbohydrates via glycolysis. This chain is Enolase, found in Ectopseudomonas mendocina (strain ymp) (Pseudomonas mendocina).